Consider the following 175-residue polypeptide: MTVSKSNQILSNDRDLENISNKNIEDIKEFINTANSRLDAIDSITNNSHAIAADAVTAMICENQDSVNTKISLDTTNKMSVCLRDGEIILRIVSYLLISDDESVLSKNCLKDLKNTYLALGVPLKNAIRVFELMRDATISDLKSTVNSMKGEKEFLSDLISNTEFQFERIINLLR.

Cys82 contacts (2R,3E)-phycoerythrobilin.

It belongs to the phycobiliprotein family. As to quaternary structure, homodimer. Contains one covalently linked phycoerythrobilin chromophore.

Its function is as follows. Green-light absorbing phycoerythrin of unknown function. This Prochlorococcus marinus subsp. pastoris (strain CCMP1986 / NIES-2087 / MED4) protein is R-phycoerythrin subunit beta (cpeB).